A 448-amino-acid chain; its full sequence is Nuclear distribution protein PAC1 (448 aa).

Positions 9–41 (QAEELHKSIIAYLAANNFQDSVTAMRTELNLGE) constitute a LisH domain. The disordered stretch occupies residues 74–95 (SATPTSLSNRKQDPASWLPAGP). WD repeat units lie at residues 102–143 (SHRT…RTVK), 145–185 (HTKA…KNIR), 189–236 (GHDH…CLKT), 239–278 (GHSDWIRDVSPSLDGKYLLSTGNDRTLRLWDISMNTPETK), 283–343 (GHEH…IKTL), 345–384 (GHDNWVRSLVFHPSGKFLLSVSDDKTIRCWDLSQEGKCVK), and 389–444 (MHEH…TSLR).

The protein belongs to the WD repeat LIS1/nudF family. In terms of assembly, self-associates. Interacts with NDL1 and dynein.

The protein localises to the cytoplasm. It is found in the cytoskeleton. It localises to the spindle pole. Positively regulates the activity of the minus-end directed microtubule motor protein dynein. May enhance dynein-mediated microtubule sliding by targeting dynein to the microtubule plus end. Required for nuclear migration during vegetative growth as well as development. Required for retrograde early endosome (EE) transport from the hyphal tip. Required for localization of dynein to the mitotic spindle poles. Recruits additional proteins to the dynein complex at SPBs. The polypeptide is Nuclear distribution protein PAC1 (Fusarium vanettenii (strain ATCC MYA-4622 / CBS 123669 / FGSC 9596 / NRRL 45880 / 77-13-4) (Fusarium solani subsp. pisi)).